The primary structure comprises 159 residues: Immunoglobulin J chain (159 aa).

The signal sequence occupies residues 1–21 (MKTHLLLWGVLAIFVKAVLVT). Cystine bridges form between cysteine 34–cysteine 123, cysteine 93–cysteine 113, and cysteine 131–cysteine 156. Asparagine 70 carries N-linked (GlcNAc...) (complex) asparagine glycosylation.

As to quaternary structure, part of the secretory IgA (sIgA) complex that consists of two, four or five IgA monomers, and two additional non-Ig polypeptides, namely the JCHAIN and the secretory component (the proteolytic product of PIGR). Part of the secretory IgM (sIgM) complex that consist of five IgM monomers, and two additional non-Ig polypeptides, namely the JCHAIN and the secretory component (the proteolytic product of PIGR). JCHAIN-containing IgM interacts (via CH4 domain) with FCRM (via Ig-like domain).

Its subcellular location is the secreted. Serves to link two monomer units of either IgM or IgA. In the case of IgM, the J chain-joined dimer is a nucleating unit for the IgM pentamer, and in the case of IgA it induces dimers and/or larger polymers. It also helps to bind these immunoglobulins to secretory component. In Mus musculus (Mouse), this protein is Immunoglobulin J chain.